Here is a 276-residue protein sequence, read N- to C-terminus: MLMITSFANPRVAQAFVDYMATQGVILTIQQHNQSDVWLADESQAERVRAELARFLENPADPRYLAASWQSGHTDSGLHYRRYPFFAALRERAGPVTWVMMIACVVVFIAMQILGDQEVMLWLAWPFDPTLKFEFWRYFTHALMHFSLMHILFNLLWWWYLGGAVEKRLGSGKLIVITLISALLSGYVQQKFSGPWFGGLSGVVYALMGYVWLRGERDPQSGIYLQRGLIIFALIWIVAGWFDLFGMSMANGAHIAGLAVGLAMAFVDSLNARKRK.

A run of 6 helical transmembrane segments spans residues 94–114 (GPVTWVMMIACVVVFIAMQIL), 142–162 (ALMHFSLMHILFNLLWWWYLG), 169–189 (LGSGKLIVITLISALLSGYVQ), 192–212 (FSGPWFGGLSGVVYALMGYVW), 229–249 (LIIFALIWIVAGWFDLFGMSM), and 250–270 (ANGAHIAGLAVGLAMAFVDSL). The Nucleophile role is filled by S201. H254 is a catalytic residue.

It belongs to the peptidase S54 family.

The protein resides in the cell inner membrane. It carries out the reaction Cleaves type-1 transmembrane domains using a catalytic dyad composed of serine and histidine that are contributed by different transmembrane domains.. Rhomboid-type serine protease that catalyzes intramembrane proteolysis. This chain is Rhomboid protease GlpG, found in Escherichia coli O7:K1 (strain IAI39 / ExPEC).